A 371-amino-acid chain; its full sequence is 4-hydroxyphenylpyruvate dioxygenase-like protein (371 aa).

VOC domains lie at 7-135 (RLCH…LLQR) and 160-328 (HVDH…VFTK). Positions 163, 258, and 339 each coordinate Fe cation.

It belongs to the 4HPPD family. It depends on Fe cation as a cofactor.

The protein resides in the mitochondrion. The catalysed reaction is 3-(4-hydroxyphenyl)pyruvate + O2 = (S)-4-hydroxymandelate + CO2. Its function is as follows. Iron-dependent dioxygenase that catalyzes the conversion of 4-hydroxyphenylpyruvate (4-HPPA) to 4-hydroxymandelate (4-HMA) in the mitochondria, one of the steps in the biosynthesis of coenzyme Q10 from tyrosine. The protein is 4-hydroxyphenylpyruvate dioxygenase-like protein of Rattus norvegicus (Rat).